We begin with the raw amino-acid sequence, 206 residues long: Histidine biosynthesis bifunctional protein HisIE (206 aa).

Residues 1–117 (MGSNEVATGD…SCFPSAPGQF (117 aa)) are phosphoribosyl-AMP cyclohydrolase. Positions 118-206 (LGSLDALVAE…AAALLESRHQ (89 aa)) are phosphoribosyl-ATP pyrophosphohydrolase.

The protein in the N-terminal section; belongs to the PRA-CH family. This sequence in the C-terminal section; belongs to the PRA-PH family.

The protein resides in the cytoplasm. The enzyme catalyses 1-(5-phospho-beta-D-ribosyl)-ATP + H2O = 1-(5-phospho-beta-D-ribosyl)-5'-AMP + diphosphate + H(+). It catalyses the reaction 1-(5-phospho-beta-D-ribosyl)-5'-AMP + H2O = 1-(5-phospho-beta-D-ribosyl)-5-[(5-phospho-beta-D-ribosylamino)methylideneamino]imidazole-4-carboxamide. The protein operates within amino-acid biosynthesis; L-histidine biosynthesis; L-histidine from 5-phospho-alpha-D-ribose 1-diphosphate: step 2/9. Its pathway is amino-acid biosynthesis; L-histidine biosynthesis; L-histidine from 5-phospho-alpha-D-ribose 1-diphosphate: step 3/9. This chain is Histidine biosynthesis bifunctional protein HisIE, found in Xanthomonas axonopodis pv. citri (strain 306).